A 195-amino-acid chain; its full sequence is Flavin prenyltransferase UbiX (195 aa).

Residues 17-19 (GGS), Ser43, 94-97 (SAGT), and Arg129 each bind FMN. Residues Tyr159 and Arg175 each contribute to the dimethylallyl phosphate site.

Belongs to the UbiX/PAD1 family.

It carries out the reaction dimethylallyl phosphate + FMNH2 = prenylated FMNH2 + phosphate. Functionally, flavin prenyltransferase that catalyzes the synthesis of the prenylated FMN cofactor (prenyl-FMN) for 4-hydroxy-3-polyprenylbenzoic acid decarboxylase UbiD. The prenyltransferase is metal-independent and links a dimethylallyl moiety from dimethylallyl monophosphate (DMAP) to the flavin N5 and C6 atoms of FMN. This chain is Flavin prenyltransferase UbiX, found in Deinococcus radiodurans (strain ATCC 13939 / DSM 20539 / JCM 16871 / CCUG 27074 / LMG 4051 / NBRC 15346 / NCIMB 9279 / VKM B-1422 / R1).